The chain runs to 356 residues: Protein trichome birefringence-like 41 (356 aa).

Residues 12–31 traverse the membrane as a helical; Signal-anchor for type II membrane protein segment; sequence SALVLSLLLLLLLPLLHEAA. A GDS motif motif is present at residues 107–109; that stretch reads GDS. The DCXHWCLPGXXDXWN motif motif lies at 333–347; it reads DCSHWCLSGVPDTWN.

It belongs to the PC-esterase family. TBL subfamily.

It is found in the membrane. In terms of biological role, may act as a bridging protein that binds pectin and other cell wall polysaccharides. Probably involved in maintaining esterification of pectins. May be involved in the specific O-acetylation of cell wall polymers. The protein is Protein trichome birefringence-like 41 (TBL41) of Arabidopsis thaliana (Mouse-ear cress).